Reading from the N-terminus, the 361-residue chain is Myricetin 3-O-methyltransferase 3 (361 aa).

An S-adenosyl-L-methionine-binding site is contributed by Asp-229. The active-site Proton acceptor is His-267.

The protein belongs to the class I-like SAM-binding methyltransferase superfamily. Cation-independent O-methyltransferase family. In terms of assembly, homodimer. In terms of tissue distribution, mainly expressed in leaves secreting glandular trichomes types 1 and 4 and, to a lesser extent, in storage trichomes type 6.

It catalyses the reaction kaempferol + S-adenosyl-L-methionine = 3-O-methylkaempferol + S-adenosyl-L-homocysteine + H(+). The enzyme catalyses quercetin + S-adenosyl-L-methionine = 3',4',5,7-tetrahydroxy-3-methoxyflavone + S-adenosyl-L-homocysteine + H(+). The catalysed reaction is myricetin + S-adenosyl-L-methionine = 3-O-methylmyricetin + S-adenosyl-L-homocysteine + H(+). It carries out the reaction kaempferide + S-adenosyl-L-methionine = 3,4'-O-dimethylkaempferol + S-adenosyl-L-homocysteine + H(+). It catalyses the reaction isorhamnetin + S-adenosyl-L-methionine = 3,3'-O-dimethylquercetin + S-adenosyl-L-homocysteine + H(+). The enzyme catalyses rhamnetin + S-adenosyl-L-methionine = 3',4',5-trihydroxy-3,7-dimethoxyflavone + S-adenosyl-L-homocysteine + H(+). The catalysed reaction is laricitrin + S-adenosyl-L-methionine = 3,3'-O-dimethylmyricetin + S-adenosyl-L-homocysteine + H(+). It carries out the reaction syringetin + S-adenosyl-L-methionine = 3,3',5'-O-trimethylmyricetin + S-adenosyl-L-homocysteine + H(+). It functions in the pathway flavonoid metabolism. Flavonoid 3-O-methyltransferase involved in the biosynthesis of polymethoxylated flavonoids natural products such as myricetin derivatives, aroma compounds possessing antioxidant properties and exhibiting pharmacological activities such as anti-carcinogen, anti-viral, anti-thrombotic, anti-diabetic, anti-atherosclerotic, and anti-inflammatory effects. Catalyzes S-adenosylmethionine-dependent regioselective 3-O-methylation of flavonoids; active on various hydroxylated flavonoid substrates. Active with myricetin, quercetin, kaempferol, 4'-methyl kaempferol (kaempferide), 3'-methyl quercetin (isorhamnetin), 7-methyl quercetin (rhamnetin), 3'-methyl myricetin (laricitrin) and 3',5'-dimethyl myricetin (syringetin), thus producing 3-methyl myricetin, 3-methyl quercetin, 3-methyl kaempferol, 4',3-methyl kaempferol, 3',3-methyl quercetin, 7,3-dimethyl quercetin, 3',3-dimethyl myricetin and 3',5',3-dimethyl myricetin, respectively. Inactive with flavonol substrates methylated at the 3-hydroxyl position such as 3-O-methyl quercetin. This chain is Myricetin 3-O-methyltransferase 3, found in Solanum habrochaites (Wild tomato).